Reading from the N-terminus, the 1479-residue chain is Tyrosine-protein kinase BAZ1B (1479 aa).

The region spanning 20–126 (EPLFTIPHTQ…GEECDFEVGK (107 aa)) is the WAC domain. The interval 146-212 (EAVEKKSDGA…TSLKKGERKW (67 aa)) is disordered. 2 stretches are compositionally biased toward basic and acidic residues: residues 148 to 165 (VEKKSDGACDSPSSDKEN) and 173 to 195 (LQKKETVVKEDEGRRESINDRAR). Phosphoserine is present on residues Ser152, Ser158, and Ser161. Residues 207–213 (KGERKWA) carry the C motif motif. A Phosphothreonine modification is found at Thr266. The disordered stretch occupies residues 302–333 (NPSTKRRNTGSPDRKPSKKPKRDSSSLSSPLN). Residues Ser325, Ser330, Ser345, Ser361, and Ser374 each carry the phosphoserine modification. 2 disordered regions span residues 376–433 (NNNK…KTPK) and 448–472 (TQKMTRTPRSSGGVPRSSGKPHKHL). Residues 381-396 (HSFHIPKKGPAAKKPG) are compositionally biased toward basic residues. Residues 415–425 (GQKSTGNSKSP) are compositionally biased toward polar residues. Low complexity predominate over residues 454-465 (TPRSSGGVPRSS). Residues 537–587 (ASMSEEQRKEYLKKKRQELKERLREKAKERREREMLERLEKQKRFEDQELG) adopt a coiled-coil conformation. Residues 605–669 (NTLFGDVALV…LQTLLQDEIA (65 aa)) form the DDT domain. 3 positions are modified to phosphoserine: Ser706, Ser709, and Ser717. Residues 774–809 (SAELWKERLAVLKEENDKKRAEKQKRKEMEARNKEN) are a coiled coil. The segment at 789–813 (NDKKRAEKQKRKEMEARNKENGKEE) is disordered. Residue Lys827 forms a Glycyl lysine isopeptide (Lys-Gly) (interchain with G-Cter in SUMO1); alternate linkage. Lys827 is covalently cross-linked (Glycyl lysine isopeptide (Lys-Gly) (interchain with G-Cter in SUMO2); alternate). Glycyl lysine isopeptide (Lys-Gly) (interchain with G-Cter in SUMO2) cross-links involve residues Lys854, Lys1043, Lys1089, and Lys1107. The stretch at 854-890 (KRKREIQERETKVRLEREAEEERMRKHKAAAEKAFQE) forms a coiled coil. A PHD-type zinc finger spans residues 1184 to 1234 (NARCKVCRKKGEDDKLILCDECNKAFHLFCLRPALYEVPDGEWQCPACQPP). A disordered region spans residues 1231 to 1324 (CQPPTARRNS…SRPKDDPEVD (94 aa)). Over residues 1254 to 1277 (SEGDESGEEEEEEEEEEEEEEDYE) the composition is skewed to acidic residues. Positions 1257–1284 (DESGEEEEEEEEEEEEEEDYEVAGLRLR) form a coiled coil. Over residues 1305–1316 (PGKKSHPARRSR) the composition is skewed to basic residues. Residue Ser1315 is modified to Phosphoserine. At Lys1331 the chain carries N6-acetyllysine. The Bromo domain maps to 1335-1439 (RRQSLELQKC…QCLLALLQKH (105 aa)). A phosphoserine mark is found at Ser1338, Ser1464, Ser1466, and Ser1468. The interval 1451-1479 (RKFPDRLADDEGDSDSESVGQSRGRRQKK) is disordered.

The protein belongs to the WAL family. BAZ1B subfamily. Component of the WICH-1 ISWI chromatin remodeling complex, at least composed of SMARCA1 and BAZ1B/WSTF, which regulates the spacing of histone octamers on the DNA template to facilitate access to DNA. Within the WICH-1 ISWI chromatin remodeling complex interacts with SMARCA1; the interaction is direct. Component of the WICH-5 ISWI chromatin remodeling complex (also called the WICH complex), at least composed of SMARCA5/SNF2H and BAZ1B/WSTF, which regulates the spacing of histone octamers on the DNA template to facilitate access to DNA. Within the WICH-5 ISWI chromatin remodeling complex interacts with SMARCA5/SNF2H; the interaction is direct. Component of the B-WICH chromatin remodeling complex, at least composed of SMARCA5/SNF2H, BAZ1B/WSTF, SF3B1, DEK, MYO1C, ERCC6, MYBBP1A and DDX21. Within the B-WICH chromatin remodeling complex, interacts with SMARCA5/SNF2H, DDX21, DEK, MYBBP1A, SF3B1 and ERCC6. Interacts with MYO1C. Interacts with PCNA; the interaction is direct and is required for BAZ1B/WSTF binding to replication foci during S phase. Interacts with CDT1. It depends on Mn(2+) as a cofactor.

Its subcellular location is the nucleus. It carries out the reaction L-tyrosyl-[protein] + ATP = O-phospho-L-tyrosyl-[protein] + ADP + H(+). Atypical tyrosine-protein kinase that plays a central role in chromatin remodeling and acts as a transcription regulator. Involved in DNA damage response by phosphorylating 'Tyr-142' of histone H2AX (H2AXY142ph). H2AXY142ph plays a central role in DNA repair and acts as a mark that distinguishes between apoptotic and repair responses to genotoxic stress. Regulatory subunit of the ATP-dependent WICH-1 and WICH-5 ISWI chromatin remodeling complexes, which form ordered nucleosome arrays on chromatin and facilitate access to DNA during DNA-templated processes such as DNA replication, transcription, and repair. Both complexes regulate the spacing of nucleosomes along the chromatin and have the ability to slide mononucleosomes to the center of a DNA template. The WICH-1 ISWI chromatin remodeling complex has a lower ATP hydrolysis rate than the WICH-5 ISWI chromatin remodeling complex. The WICH-5 ISWI chromatin remodeling complex regulates the transcription of various genes, has a role in RNA polymerase I transcription. Within the B-WICH complex has a role in RNA polymerase III transcription. Mediates the recruitment of the WICH-5 ISWI chromatin remodeling complex to replication foci during DNA replication. The chain is Tyrosine-protein kinase BAZ1B (Baz1b) from Mus musculus (Mouse).